The sequence spans 345 residues: Phosphate acyltransferase (345 aa).

It belongs to the PlsX family. Homodimer. Probably interacts with PlsY.

It is found in the cytoplasm. It catalyses the reaction a fatty acyl-[ACP] + phosphate = an acyl phosphate + holo-[ACP]. Its pathway is lipid metabolism; phospholipid metabolism. Catalyzes the reversible formation of acyl-phosphate (acyl-PO(4)) from acyl-[acyl-carrier-protein] (acyl-ACP). This enzyme utilizes acyl-ACP as fatty acyl donor, but not acyl-CoA. This Trichlorobacter lovleyi (strain ATCC BAA-1151 / DSM 17278 / SZ) (Geobacter lovleyi) protein is Phosphate acyltransferase.